The primary structure comprises 345 residues: S-adenosylmethionine:tRNA ribosyltransferase-isomerase (345 aa).

The protein belongs to the QueA family. Monomer.

It localises to the cytoplasm. It catalyses the reaction 7-aminomethyl-7-carbaguanosine(34) in tRNA + S-adenosyl-L-methionine = epoxyqueuosine(34) in tRNA + adenine + L-methionine + 2 H(+). The protein operates within tRNA modification; tRNA-queuosine biosynthesis. Transfers and isomerizes the ribose moiety from AdoMet to the 7-aminomethyl group of 7-deazaguanine (preQ1-tRNA) to give epoxyqueuosine (oQ-tRNA). The protein is S-adenosylmethionine:tRNA ribosyltransferase-isomerase of Helicobacter pylori (strain Shi470).